Reading from the N-terminus, the 414-residue chain is Voltage-gated ClC-type chloride channel ClcB (414 aa).

11 consecutive transmembrane segments (helical) span residues 5–25 (LVISIMLGMVSALIVWLFHQA), 54–74 (ALTPALGGLAAGLLLWAYQRY), 116–136 (SAIGREGAMVLLAALFASVFA), 147–167 (LWVACGAAAGMASAYHAPLAG), 169–189 (LFIAEILFGTLMLASLGPVVI), 220–240 (VQYFLMALLGLMAGFSGPLFL), 255–275 (LLPPLQLALGGIIVGLLSLIF), 292–312 (TPPGVLLIGGILICKLLAVLA), 327–347 (LFVGAALGMLCGQIFSLWPVL), 353–373 (LLMALTGMATLLAATTHAPIM), and 381–401 (MTGEYTLLPGLLLSCVIATTI).

The protein belongs to the chloride channel (TC 2.A.49) family. ClcB subfamily.

Its subcellular location is the cell inner membrane. Probably acts as an electrical shunt for an outwardly-directed proton pump that is linked to amino acid decarboxylation, as part of the extreme acid resistance (XAR) response. This chain is Voltage-gated ClC-type chloride channel ClcB, found in Yersinia pestis.